The primary structure comprises 51 residues: Proteinase inhibitor PTI (51 aa).

4 disulfide bridges follow: Cys3-Cys40, Cys6-Cys24, Cys7-Cys36, and Cys13-Cys49.

The protein belongs to the protease inhibitor I20 (potato type II proteinase inhibitor) family.

It is found in the secreted. This chain is Proteinase inhibitor PTI, found in Solanum tuberosum (Potato).